The primary structure comprises 418 residues: Phosphoglycerate kinase (418 aa).

Residues Val24, Asp25, Phe26, Asn27, Arg40, Ser63, His64, Gly66, Arg67, Leu122, Arg123, His169, and Arg170 each contribute to the (2R)-3-phosphoglycerate site. Position 213 (Gly213) interacts with ADP. Gly213 serves as a coordination point for CDP. Ala214 and Lys215 together coordinate AMP. Residue Ala214 participates in ATP binding. Ala214 lines the Mg(2+) pocket. The Mg(2+) site is built by Ala217 and Asp218. Position 218 (Asp218) interacts with CDP. Lys219 contacts AMP. Lys219 serves as a coordination point for ATP. Position 237 (Gly237) interacts with ADP. Residue Gly237 coordinates CDP. Residues Gly238 and Gly312 each coordinate AMP. Positions 238 and 312 each coordinate ATP. CDP-binding residues include Gly337 and Phe342. Phe342 serves as a coordination point for ADP. Glu343 contacts AMP. Residues Glu343, Asp374, and Thr375 each contribute to the ATP site. Asp374 contacts Mg(2+).

This sequence belongs to the phosphoglycerate kinase family. Monomer. Requires Mg(2+) as cofactor.

It catalyses the reaction (2R)-3-phosphoglycerate + ATP = (2R)-3-phospho-glyceroyl phosphate + ADP. The protein operates within carbohydrate degradation; glycolysis; pyruvate from D-glyceraldehyde 3-phosphate: step 2/5. This is Phosphoglycerate kinase (PGK) from Euplotes crassus.